Here is a 31-residue protein sequence, read N- to C-terminus: Cycloviolacin-O19 (31 aa).

Positions G1–D31 form a cross-link, cyclopeptide (Gly-Asp). 3 disulfide bridges follow: C5–C21, C9–C23, and C14–C28.

This is a cyclic peptide. As to expression, expressed in petioles and runners but not in leaves, petals and roots (at protein level).

In terms of biological role, probably participates in a plant defense mechanism. This is Cycloviolacin-O19 from Viola odorata (Sweet violet).